A 211-amino-acid polypeptide reads, in one-letter code: Receptor expression-enhancing protein 6 (211 aa).

The next 2 helical transmembrane spans lie at 44-64 (LSLY…IGFV) and 89-109 (WVVY…LSWF). Positions 190 to 211 (AGPSTPLEADLKPSQTPQPKDK) are disordered. The span at 202-211 (PSQTPQPKDK) shows a compositional bias: polar residues.

This sequence belongs to the DP1 family. As to quaternary structure, interacts with STX3. Interacts with clathrin. In terms of tissue distribution, expressed in circumvallate papillae and testis. Expressed in the retina. Isoform 1 is predominantly present in mature optic cups. Isoform 1 expression is confined to the cell body and inner segment of developing rod photoreceptor cells.

The protein resides in the endoplasmic reticulum membrane. It localises to the cytoplasmic vesicle. It is found in the clathrin-coated vesicle membrane. Required for correct function and survival of retinal photoreceptors. Required for retinal development. In rod photoreceptors, facilitates stability and/or trafficking of guanylate cyclases and is required to maintain endoplasmic reticulum and mitochondrial homeostasis. May play a role in clathrin-coated intracellular vesicle trafficking of proteins from the endoplasmic reticulum to the retinal rod plasma membrane. This is Receptor expression-enhancing protein 6 (REEP6) from Homo sapiens (Human).